The sequence spans 2254 residues: MAGSVNGNHSAVGPGINYETVSQVDEFCKALRGKRPIHSILIANNGMAAVKFIRSVRTWAYETFGTEKAILLVGMATPEDMRINAEHIRIADQFVEVPGGTNNNNYANVQLIVEMAEVTRVDAVWPGWGHASENPELPDALDAKGIIFLGPPASSMAALGDKIGSSLIAQAADVPTLPWSGSHVKIPPNSNLVTIPEEIYRQACVYTTEEAIASCQVVGYPAMIKASWGGGGKGIRKVHNDDEVRALFKQVQGEVPGSPIFIMKVASQSRHLEVQLLCDKHGNVSALHSRDCSVQRRHQKIIEEGPITVAPPETVKKLEQAARRLAKSVNYVGAATVEYLYSMDTGEYYFLELNPRLQVEHPVTEWIAEINLPAAQVAVGMGIPLWQIPEIRRFYGIEHGGGYDSWRKTSVVAFPFDFDKAQSIRPKGHCVAVRVTSEDPDDGFKPTSGRVQELSFKSKPNVWAYFSVKSGGGIHEFSDSQFGHVFAFGESRALAIANMVLGLKEIQIRGEIRTNVDYTIDLLHASDYRDNKIHTGWLDSRIAMRVRAERPPWYLSVVGGALYKASATSAAVVSDYVGYLEKGQIPPKHISLVHSQVSLNIEGSKYTIDVVRGGSGTYRLRMNKSEVVAEIHTLRDGGLLMQLDGKSHVIYAEEEAAGTRLLIDGRTCLLQNDHDPSKLMAETPCKLMRYLISDNSNIDADTPYAEVEVMKMCMPLLSPASGVIHFKMSEGQAMQAGELIANLDLDDPSAVRKAEPFHGSFPRLGLPTAISGRVHQRCAATLNAARMILAGYEHKVDEVVQDLLNCLDSPELPFLQWQECFAVLATRLPKNLRNMLESKYREFESISRNSLTTDFPAKLLKGILEAHLSSCDEKERGALERLIEPLMSLAKSYEGGRESHARVIVHSLFEEYLSVEELFNDNMLADVIERMRQLYKKDLLKIVDIVLSHQGIKNKNKLVLRLMEQLVYPNPAAYRDKLIRFSTLNHTNYSELALKASQLLEQTKLSELRSNIARSLSELEMFTEDGENMDTPKRKSAINERIEDLVSASLAVEDALVGLFDHSDHTLQRRVVETYIRRLYQPYVVKDSVRMQWHRSGLLASWEFLEEHMERKNIGLDDPDTSEKGLVEKRSKRKWGAMVIIKSLQFLPSIISAALRETKHNDYETAGAPLSGNMMHIAIVGINNQMSLLQDSGDEDQAQERVNKLAKILKEEEVSSSLCSAGVGVISCIIQRDEGRTPMRHSFHWSLEKQYYVEEPLLRHLEPPLSIYLELDKLKGYSNIQYTPSRDRQWHLYTVTDKPVPIKRMFLRSLVRQATMNDGFILQQGQDKQLSQTLISMAFTSKCVLRSLMDAMEELELNAHNAAMKPDHAHMFLCILREQQIDDLVPFPRRVEVNAEDEETTVEMILEEAAREIHRSVGVRMHRLGVCEWEVRLWLVSSGLACGAWRVVVANVTGRTCTVHIYREVETPGRNSLIYHSITKKGPLHETPISDQYKPLGYLDRQRLAARRSNTTYCYDFPLAFGTALELLWASQHPGVKKPYKDTLINVKELVFSKPEGSSGTSLDLVERPPGLNDFGMVAWCLDMSTPEFPMGRKLLVIANDVTFKAGSFGPREDAFFLAVTELACAKKLPLIYLAANSGARLGVAEEVKACFKVGWSDEISPENGFQYIYLSPEDHERIGSSVIAHEVKLSSGETRWVIDTIVGKEDGIGVENLTGSGAIAGAYSKAYNETFTLTFVSGRTVGIGAYLARLGMRCIQRLDQPIILTGFSTLNKLLGREVYSSHMQLGGPKIMGTNGVVHLTVSDDLEGVSAILNWLSYIPAYVGGPLPVLAPLDPPERIVEYVPENSCDPRAAIAGVKDNTGKWLGGIFDKNSFIETLEGWARTVVTGRAKLGGIPVGVVAVETQTVMQIIPADPGQLDSHERVVPQAGQVWFPDSAAKTAQALMDFNREELPLFILANWRGFSGGQRDLFEGILQAGSTIVENLRTYRQPVFVYIPMMGELRGGAWVVVDSQINSDYVEMYADETARGNVLEPEGTIEIKFRTKELLECMGRLDQKLISLKAKLQDAKQSEAYANIELLQQQIKAREKQLLPVYIQIATKFAELHDTSMRMAAKGVIKSVVEWSGSRSFFYKKLNRRIAESSLVKNVREASGDNLAYKSSMRLIQDWFCNSDIAKGKEEAWTDDQVFFTWKDNVSNYELKLSELRAQKLLNQLAEIGNSSDLQALPQGLANLLNKVEPSKREELVAAIRKVLG.

The 508-residue stretch at 36–543 (PIHSILIANN…HTGWLDSRIA (508 aa)) folds into the Biotin carboxylation domain. An ATP-grasp domain is found at 189 to 381 (NSNLVTIPEE…LPAAQVAVGM (193 aa)). ATP is bound at residue 215–272 (CQVVGYPAMIKASWGGGGKGIRKVHNDDEVRALFKQVQGEVPGSPIFIMKVASQSRHL). Mg(2+) contacts are provided by E338, E352, and N354. Mn(2+) is bound by residues E338, E352, and N354. Residue R356 is part of the active site. The Biotinyl-binding domain occupies 670 to 744 (LQNDHDPSKL…QAGELIANLD (75 aa)). K711 is modified (N6-biotinyllysine). At T1031 the chain carries Phosphothreonine. S1192 is subject to Phosphoserine. The region spanning 1492–1831 (QYKPLGYLDR…YVGGPLPVLA (340 aa)) is the CoA carboxyltransferase N-terminal domain. The carboxyltransferase stretch occupies residues 1492-2150 (QYKPLGYLDR…ESSLVKNVRE (659 aa)). The CoA site is built by R1740, K2041, and R2043. The CoA carboxyltransferase C-terminal domain maps to 1835 to 2150 (PPERIVEYVP…ESSLVKNVRE (316 aa)).

Homodimer. It depends on biotin as a cofactor. Requires Mg(2+) as cofactor. Mn(2+) serves as cofactor. As to expression, expressed in roots, trichomes, epidermal leaf cells, siliques, petals, anthers, and seeds.

It is found in the cytoplasm. The protein resides in the cytosol. It catalyses the reaction hydrogencarbonate + acetyl-CoA + ATP = malonyl-CoA + ADP + phosphate + H(+). The catalysed reaction is N(6)-biotinyl-L-lysyl-[protein] + hydrogencarbonate + ATP = N(6)-carboxybiotinyl-L-lysyl-[protein] + ADP + phosphate + H(+). It participates in lipid metabolism; malonyl-CoA biosynthesis; malonyl-CoA from acetyl-CoA: step 1/1. Multifunctional enzyme that catalyzes the carboxylation of acetyl-CoA, forming malonyl-CoA, which is used in the plastid for fatty acid synthesis and in the cytosol in various biosynthetic pathways including fatty acid elongation. Required for very long chain fatty acids elongation. Necessary for embryo and plant development. Plays a central function in embryo morphogenesis, especially in apical meristem development. Involved in cell proliferation and tissue patterning. May act as a repressor of cytokinin response. This is Acetyl-CoA carboxylase 1 (ACC1) from Arabidopsis thaliana (Mouse-ear cress).